The sequence spans 244 residues: Sepiapterin reductase (244 aa).

Residues 9–15 (GAGKGIG), 40–42 (SRT), 66–67 (DI), and Asn-93 each bind NADP(+). Substrate is bound at residue Phe-99. Residue Thr-116 coordinates NADP(+). Residues Ser-145 and Tyr-158 each contribute to the substrate site. NADP(+)-binding positions include Tyr-158, Lys-162, and 191–196 (VYTPMW). Trp-196 contributes to the substrate binding site.

It belongs to the short-chain dehydrogenases/reductases (SDR) family. In terms of assembly, homodimer.

The protein resides in the cytoplasm. It catalyses the reaction L-threo-7,8-dihydrobiopterin + NADP(+) = L-sepiapterin + NADPH + H(+). The enzyme catalyses L-threo-tetrahydrobiopterin + 2 NADP(+) = 6-pyruvoyl-5,6,7,8-tetrahydropterin + 2 NADPH + 2 H(+). Slightly inhibited by N-acetyldopamine but not by N-acetylserotonin or melatonin. Functionally, catalyzes the final reductions in tetra-hydrobiopterin biosynthesis to form 5,6,7,8-tetrahydrobiopterin. The chain is Sepiapterin reductase from Chlorobaculum tepidum (strain ATCC 49652 / DSM 12025 / NBRC 103806 / TLS) (Chlorobium tepidum).